Reading from the N-terminus, the 29-residue chain is Kappa-sparatoxin-Hv1e (29 aa).

Intrachain disulfides connect cysteine 3/cysteine 17, cysteine 10/cysteine 22, and cysteine 16/cysteine 26.

Expressed by the venom gland.

Its subcellular location is the secreted. Its function is as follows. Inhibitor of voltage-gated potassium channels of the Kv4/KCND family. Blocks calcium channels (Cav). The chain is Kappa-sparatoxin-Hv1e from Heteropoda venatoria (Brown huntsman spider).